Consider the following 127-residue polypeptide: Ribosome-binding factor A (127 aa).

Belongs to the RbfA family. In terms of assembly, monomer. Binds 30S ribosomal subunits, but not 50S ribosomal subunits or 70S ribosomes.

The protein localises to the cytoplasm. In terms of biological role, one of several proteins that assist in the late maturation steps of the functional core of the 30S ribosomal subunit. Associates with free 30S ribosomal subunits (but not with 30S subunits that are part of 70S ribosomes or polysomes). Required for efficient processing of 16S rRNA. May interact with the 5'-terminal helix region of 16S rRNA. The polypeptide is Ribosome-binding factor A (Geobacillus kaustophilus (strain HTA426)).